A 70-amino-acid polypeptide reads, in one-letter code: Conotoxin Im23.3 (70 aa).

The N-terminal stretch at 1–22 is a signal peptide; the sequence is MIMRMTLTLFVLVVMTAASASG. The propeptide occupies 23–28; sequence DALTEA. Intrachain disulfides connect cysteine 34–cysteine 41, cysteine 45–cysteine 53, and cysteine 54–cysteine 69.

Belongs to the conotoxin K superfamily. In terms of tissue distribution, expressed by the venom duct.

The protein localises to the secreted. Neurotoxin that induces excitatory symptoms in mice following intracranial administration. No symptoms are observed after intraperitoneal and intravenous (tail vein) injections. The polypeptide is Conotoxin Im23.3 (Conus imperialis (Imperial cone)).